We begin with the raw amino-acid sequence, 144 residues long: Ribosome maturation factor RimP (144 aa).

The protein belongs to the RimP family.

Its subcellular location is the cytoplasm. Required for maturation of 30S ribosomal subunits. This is Ribosome maturation factor RimP from Azoarcus sp. (strain BH72).